We begin with the raw amino-acid sequence, 141 residues long: Hemoglobin subunit alpha-D (141 aa).

The Globin domain occupies 1-141 (MLTADDKKLI…VASVLAEKYR (141 aa)). Residues H58 and H87 each contribute to the heme b site.

The protein belongs to the globin family. As to quaternary structure, heterotetramer of two alpha-D chains and two beta chains. Red blood cells.

Its function is as follows. Involved in oxygen transport from the lung to the various peripheral tissues. The protein is Hemoglobin subunit alpha-D (HBAD) of Rhea americana (Greater rhea).